We begin with the raw amino-acid sequence, 410 residues long: UDP-N-acetylglucosamine--N-acetylmuramyl-(pentapeptide) pyrophosphoryl-undecaprenol N-acetylglucosamine transferase (410 aa).

The interval 1 to 35 is disordered; the sequence is MKDTVSQPAGGRGATAPRPADAASPSCGSSPSADS. A compositionally biased stretch (low complexity) spans 14 to 35; that stretch reads ATAPRPADAASPSCGSSPSADS. UDP-N-acetyl-alpha-D-glucosamine contacts are provided by residues 45 to 47, Asn167, Arg204, Ser238, and Gln334; that span reads TAG.

The protein belongs to the glycosyltransferase 28 family. MurG subfamily.

It localises to the cell membrane. The catalysed reaction is di-trans,octa-cis-undecaprenyl diphospho-N-acetyl-alpha-D-muramoyl-L-alanyl-D-glutamyl-meso-2,6-diaminopimeloyl-D-alanyl-D-alanine + UDP-N-acetyl-alpha-D-glucosamine = di-trans,octa-cis-undecaprenyl diphospho-[N-acetyl-alpha-D-glucosaminyl-(1-&gt;4)]-N-acetyl-alpha-D-muramoyl-L-alanyl-D-glutamyl-meso-2,6-diaminopimeloyl-D-alanyl-D-alanine + UDP + H(+). The protein operates within cell wall biogenesis; peptidoglycan biosynthesis. Functionally, cell wall formation. Catalyzes the transfer of a GlcNAc subunit on undecaprenyl-pyrophosphoryl-MurNAc-pentapeptide (lipid intermediate I) to form undecaprenyl-pyrophosphoryl-MurNAc-(pentapeptide)GlcNAc (lipid intermediate II). This Mycobacterium tuberculosis (strain ATCC 25177 / H37Ra) protein is UDP-N-acetylglucosamine--N-acetylmuramyl-(pentapeptide) pyrophosphoryl-undecaprenol N-acetylglucosamine transferase.